The sequence spans 496 residues: Chaperone SurA (496 aa).

The signal sequence occupies residues 1-42 (MACKSTAVRSATRVAPTRRLGMVTGALVALMAGAALLPAAHA). A disordered region spans residues 53-80 (RGIFTTPDASPSQPLLRGTLPGPSTASG). PpiC domains are found at residues 235-337 (VQEY…KLVD) and 349-447 (VAQT…QVEG).

It is found in the periplasm. The catalysed reaction is [protein]-peptidylproline (omega=180) = [protein]-peptidylproline (omega=0). Its function is as follows. Chaperone involved in the correct folding and assembly of outer membrane proteins. Recognizes specific patterns of aromatic residues and the orientation of their side chains, which are found more frequently in integral outer membrane proteins. May act in both early periplasmic and late outer membrane-associated steps of protein maturation. The protein is Chaperone SurA of Ralstonia nicotianae (strain ATCC BAA-1114 / GMI1000) (Ralstonia solanacearum).